Consider the following 871-residue polypeptide: Rho guanine nucleotide exchange factor 26 (871 aa).

Disordered stretches follow at residues 1–49 (MDGE…LLIT), 86–233 (AQRR…NPSV), and 288–310 (PLGH…SLRR). A Phosphoserine modification is found at Ser22. A compositionally biased stretch (pro residues) spans 136 to 156 (PAPPPPPVLRPPRTPNAPAPC). The segment covering 173 to 192 (PTANGLAANNDSPGSGSQSG) has biased composition (polar residues). Residue Ser392 is modified to Phosphoserine. The 185-residue stretch at 439 to 623 (KRQEAIFEVI…SKLVRLCNEG (185 aa)) folds into the DH domain. The PH domain occupies 655-782 (WLVKRGELTA…WITALGHSSG (128 aa)). Residues 789–850 (TSLTQVEIVR…PMECAKEITC (62 aa)) form the SH3 domain.

As to quaternary structure, interacts with ICAM1 and RHOG. In terms of tissue distribution, isoform 1 is broadly expressed, with highest levels in liver (at protein level). Certain mRNA species appear to be specifically expressed in prostate and liver.

Its subcellular location is the cell projection. The protein resides in the ruffle. Functionally, activates RhoG GTPase by promoting the exchange of GDP by GTP. Required for the formation of membrane ruffles during macropinocytosis. Required for the formation of cup-like structures during trans-endothelial migration of leukocytes. In case of Salmonella enterica infection, activated by SopB, which induces cytoskeleton rearrangements and promotes bacterial entry. This is Rho guanine nucleotide exchange factor 26 (ARHGEF26) from Homo sapiens (Human).